The following is a 315-amino-acid chain: Adenine deaminase (315 aa).

Histidine 14, histidine 16, and histidine 194 together coordinate Zn(2+). Glutamate 197 functions as the Proton donor in the catalytic mechanism. A Zn(2+)-binding site is contributed by aspartate 275. Aspartate 276 serves as a coordination point for substrate.

This sequence belongs to the metallo-dependent hydrolases superfamily. Adenosine and AMP deaminases family. Adenine deaminase type 2 subfamily. The cofactor is Zn(2+).

The enzyme catalyses adenine + H2O + H(+) = hypoxanthine + NH4(+). Functionally, catalyzes the hydrolytic deamination of adenine to hypoxanthine. Plays an important role in the purine salvage pathway and in nitrogen catabolism. This Pseudomonas putida (strain ATCC 47054 / DSM 6125 / CFBP 8728 / NCIMB 11950 / KT2440) protein is Adenine deaminase.